A 177-amino-acid polypeptide reads, in one-letter code: SsrA-binding protein (177 aa).

2 disordered regions span residues 1-23 and 148-177; these read MYVP…KDGK and YDKR…QRGE. Positions 148-165 are enriched in basic and acidic residues; that stretch reads YDKRQTLREKQDRRESDR.

The protein belongs to the SmpB family.

It localises to the cytoplasm. In terms of biological role, required for rescue of stalled ribosomes mediated by trans-translation. Binds to transfer-messenger RNA (tmRNA), required for stable association of tmRNA with ribosomes. tmRNA and SmpB together mimic tRNA shape, replacing the anticodon stem-loop with SmpB. tmRNA is encoded by the ssrA gene; the 2 termini fold to resemble tRNA(Ala) and it encodes a 'tag peptide', a short internal open reading frame. During trans-translation Ala-aminoacylated tmRNA acts like a tRNA, entering the A-site of stalled ribosomes, displacing the stalled mRNA. The ribosome then switches to translate the ORF on the tmRNA; the nascent peptide is terminated with the 'tag peptide' encoded by the tmRNA and targeted for degradation. The ribosome is freed to recommence translation, which seems to be the essential function of trans-translation. In Streptomyces avermitilis (strain ATCC 31267 / DSM 46492 / JCM 5070 / NBRC 14893 / NCIMB 12804 / NRRL 8165 / MA-4680), this protein is SsrA-binding protein.